A 2159-amino-acid polypeptide reads, in one-letter code: ATP-binding cassette sub-family A member 7 (2159 aa).

Residues 22–42 form a helical membrane-spanning segment; the sequence is PIQLLVELLWPLFLFFILVAV. Residues 43–546 are Extracellular-facing; that stretch reads RHSHPPLEHH…DVFLRVLSRS (504 aa). An intrachain disulfide couples Cys75 to Cys222. N-linked (GlcNAc...) asparagine glycosylation occurs at Asn309. A run of 6 helical transmembrane segments spans residues 547–567, 590–610, 623–643, 652–672, 678–698, and 732–752; these read LPLFLTLAWIYSVALTVKAVV, LGWFLSCLGPFLVSAALLVLV, VVIFLFLAAFAVATVAQSFLL, LAAACGGLAYFALYLPYVLCV, LHLGGLLAASLLSPVAFGFGC, and AFLLLDAVIYGLALWYLEAVC. Residues 804-1035 enclose the ABC transporter 1 domain; the sequence is VSIRGLKKHF…LGCGYYLTLV (232 aa). Residue 838-845 participates in ATP binding; that stretch reads GHNGAGKT. Residues 846 to 866 traverse the membrane as a helical segment; that stretch reads TTLSILSGLFPPSSGSASILG. 2 disordered regions span residues 1042 to 1088 and 1172 to 1192; these read VTHD…GAVP and GGDSRPQLHLRTCTPQPPTGP. Over residues 1044-1061 the composition is skewed to basic and acidic residues; the sequence is HDAKGDSEDPRREKKSDG. Polar residues predominate over residues 1062–1081; sequence NGRTSDTAFTRGTSDKSNQA. Residues 1246–1266 traverse the membrane as a helical segment; the sequence is VVLPALFVGLALFFSLIVPPF. Topologically, residues 1267–1551 are extracellular; that stretch reads GQYPPLQLSP…TLIASSVDVL (285 aa). A disulfide bridge links Cys1359 with Cys1373. Transmembrane regions (helical) follow at residues 1552 to 1572, 1598 to 1618, 1635 to 1655, 1663 to 1683, and 1743 to 1763; these read VSICVVFAMSFVPASFTLVLI, FLWDMCNYLVAVCIVVFIFLA, LLLLLYGWSITPLMYPASFFF, VVLTCINLFIGINSSMATFVL, and IIGKNLLAMMAQGPLFLLITL. Residues 1807–2039 enclose the ABC transporter 2 domain; sequence LVLRDLTKVY…FGAGHTLTLR (233 aa). ATP is bound at residue 1841–1848; sequence GVNGAGKT. Residues 2118 to 2159 are disordered; sequence QGEEEESSRQEAEEEEVSKPGRQHPKRVSRFLEDPSSVETMI. Residues 2119-2133 show a composition bias toward acidic residues; it reads GEEEESSRQEAEEEE.

This sequence belongs to the ABC transporter superfamily. ABCA family. N-glycosylated. In terms of tissue distribution, widely expressed with higher expression in brain, lung, adrenal gland, spleen and hematopoietic tissues (at protein level). In the brain, expressed in cortex, cerebellum, hippocampus, olfactory bulb, neurons, astrocytes and microglia (at protein level). Also expressed in adipocytes and macrophages (at protein level). Expressed in thymocytes (at protein level). Highly expressed in spleen and hematopoietic tissues. Expressed in brain, lung, macrophages, microglia, oligodendrocytes and neurons.

It localises to the cell membrane. Its subcellular location is the golgi apparatus membrane. The protein localises to the early endosome membrane. It is found in the cytoplasm. The protein resides in the cell projection. It localises to the ruffle membrane. Its subcellular location is the phagocytic cup. Probable ATP-binding cassette (ABC) transporter that plays a role in lipid homeostasis and macrophage-mediated phagocytosis. Binds APOA1 and may function in apolipoprotein-mediated phospholipid efflux from cells. May also mediate cholesterol efflux. May regulate cellular ceramide homeostasis during keratinocyte differentiation. Involved in lipid raft organization and CD1D localization on thymocytes and antigen-presenting cells, which plays an important role in natural killer T-cell development and activation. Plays a role in phagocytosis of apoptotic cells by macrophages. Macrophage phagocytosis is stimulated by APOA1 or APOA2, probably by stabilization of ABCA7. Also involved in phagocytic clearance of amyloid-beta by microglia cells and macrophages. Further limits amyloid-beta production by playing a role in the regulation of amyloid-beta A4 precursor protein (APP) endocytosis and/or processing. This is ATP-binding cassette sub-family A member 7 (Abca7) from Mus musculus (Mouse).